The following is an 887-amino-acid chain: Translation initiation factor IF-2 (887 aa).

The segment at 1 to 291 (MTDQADTSER…RRRVERERKK (291 aa)) is disordered. The span at 58–117 (AAPAAAPAAAPAAAEEVAKKPVAAPEVKPAAPVEERPAPVAKAAPEVKAVPAPAPAAAPA) shows a compositional bias: low complexity. 4 stretches are compositionally biased toward basic and acidic residues: residues 148-178 (SARE…EAER), 185-194 (AAEEASRHTA), 201-215 (RAAE…DDRP), and 267-276 (AFDDESERQR). Residues 385 to 553 (ARAPVVTVMG…TILLQAELLD (169 aa)) form the tr-type G domain. The segment at 394-401 (GHVDHGKT) is G1. 394–401 (GHVDHGKT) lines the GTP pocket. Residues 419 to 423 (GITQH) form a G2 region. The G3 stretch occupies residues 441–444 (DTPG). GTP contacts are provided by residues 441–445 (DTPGH) and 495–498 (NKMD). Positions 495-498 (NKMD) are G4. The G5 stretch occupies residues 531–533 (SAK).

Belongs to the TRAFAC class translation factor GTPase superfamily. Classic translation factor GTPase family. IF-2 subfamily.

It is found in the cytoplasm. In terms of biological role, one of the essential components for the initiation of protein synthesis. Protects formylmethionyl-tRNA from spontaneous hydrolysis and promotes its binding to the 30S ribosomal subunits. Also involved in the hydrolysis of GTP during the formation of the 70S ribosomal complex. This chain is Translation initiation factor IF-2, found in Parvibaculum lavamentivorans (strain DS-1 / DSM 13023 / NCIMB 13966).